A 1770-amino-acid polypeptide reads, in one-letter code: Transposon Ty2-F Gag-Pol polyprotein (1770 aa).

Polar residues-rich tracts occupy residues 1–11, 19–39, and 49–60; these read MESQQLHQNPH, ASVTSKEVPSNQDPLAVSASN, and KVNSQQETTPGT. 2 disordered regions span residues 1-86 and 359-453; these read MESQ…GQYQ and QHSE…LPDH. The RNA-binding stretch occupies residues 295 to 397; that stretch reads ENNINVSDRL…SSKPRAAKAH (103 aa). Low complexity predominate over residues 369-381; the sequence is TSPNTTNTKVTTR. Composition is skewed to polar residues over residues 399–408 and 415–435; these read IATSSKFSRV and ESTVSSQYLSDDNELSLGQQQ. Aspartate 457 functions as the For protease activity; shared with dimeric partner in the catalytic mechanism. Residues 579-636 form an integrase-type zinc finger-like region; that stretch reads NVNKSKSVNKYPYPLIHRMLGHANFRSIQKSLKKNAVTYLKESDIEWSNASTYQCPDC. One can recognise an Integrase catalytic domain in the interval 656-831; sequence ESYEPFQYLH…AGLDITTILP (176 aa). Positions 667 and 732 each coordinate Mg(2+). Disordered stretches follow at residues 1004–1034, 1059–1135, 1146–1165, and 1170–1205; these read MGGTVESDTTSPRHSSTFTARNQNRPGSTNE, TEEP…KSSK, LPLPDLTHKSPTDTSDVSKD, and HSRQTNSSLGGMDDSNVLTTTKSKKRSLEDNETEIE. Composition is skewed to polar residues over residues 1009-1034 and 1065-1082; these read ESDTTSPRHSSTFTARNQNRPGSTNE and QRNSDTNIKYRTTNSTPS. The segment covering 1151–1165 has biased composition (basic and acidic residues); sequence LTHKSPTDTSDVSKD. Positions 1193–1227 match the Bipartite nuclear localization signal motif; that stretch reads KKRSLEDNETEIEVSRDTWNNKNMRSLEPPRSKKR. The 139-residue stretch at 1353–1491 folds into the Reverse transcriptase Ty1/copia-type domain; it reads NDYYITQLDI…DILGLEIKYQ (139 aa). Aspartate 1361, aspartate 1442, aspartate 1443, aspartate 1625, glutamate 1667, and aspartate 1700 together coordinate Mg(2+). In terms of domain architecture, RNase H Ty1/copia-type spans 1625 to 1767; that stretch reads DASYGNQPYY…IKTFKLLTNK (143 aa).

The capsid protein forms a homotrimer, from which the VLPs are assembled. The protease is a homodimer, whose active site consists of two apposed aspartic acid residues. In terms of processing, initially, virus-like particles (VLPs) are composed of the structural unprocessed proteins Gag and Gag-Pol, and also contain the host initiator methionine tRNA (tRNA(i)-Met) which serves as a primer for minus-strand DNA synthesis, and a dimer of genomic Ty RNA. Processing of the polyproteins occurs within the particle and proceeds by an ordered pathway, called maturation. First, the protease (PR) is released by autocatalytic cleavage of the Gag-Pol polyprotein, and this cleavage is a prerequisite for subsequent processing at the remaining sites to release the mature structural and catalytic proteins. Maturation takes place prior to the RT reaction and is required to produce transposition-competent VLPs.

The protein localises to the cytoplasm. It localises to the nucleus. The enzyme catalyses DNA(n) + a 2'-deoxyribonucleoside 5'-triphosphate = DNA(n+1) + diphosphate. The catalysed reaction is Endonucleolytic cleavage to 5'-phosphomonoester.. Its function is as follows. Capsid protein (CA) is the structural component of the virus-like particle (VLP), forming the shell that encapsulates the retrotransposons dimeric RNA genome. The particles are assembled from trimer-clustered units and there are holes in the capsid shells that allow for the diffusion of macromolecules. CA also has nucleocapsid-like chaperone activity, promoting primer tRNA(i)-Met annealing to the multipartite primer-binding site (PBS), dimerization of Ty2 RNA and initiation of reverse transcription. In terms of biological role, the aspartyl protease (PR) mediates the proteolytic cleavages of the Gag and Gag-Pol polyproteins after assembly of the VLP. Functionally, reverse transcriptase/ribonuclease H (RT) is a multifunctional enzyme that catalyzes the conversion of the retro-elements RNA genome into dsDNA within the VLP. The enzyme displays a DNA polymerase activity that can copy either DNA or RNA templates, and a ribonuclease H (RNase H) activity that cleaves the RNA strand of RNA-DNA heteroduplexes during plus-strand synthesis and hydrolyzes RNA primers. The conversion leads to a linear dsDNA copy of the retrotransposon that includes long terminal repeats (LTRs) at both ends. Integrase (IN) targets the VLP to the nucleus, where a subparticle preintegration complex (PIC) containing at least integrase and the newly synthesized dsDNA copy of the retrotransposon must transit the nuclear membrane. Once in the nucleus, integrase performs the integration of the dsDNA into the host genome. This chain is Transposon Ty2-F Gag-Pol polyprotein (TY2B-F), found in Saccharomyces cerevisiae (strain ATCC 204508 / S288c) (Baker's yeast).